A 692-amino-acid polypeptide reads, in one-letter code: Elongation factor G (692 aa).

Positions 8-282 (EKVRNIGIAA…AVVDYLPAPT (275 aa)) constitute a tr-type G domain. GTP is bound by residues 17–24 (AHIDAGKT), 81–85 (DTPGH), and 135–138 (NKMD).

Belongs to the TRAFAC class translation factor GTPase superfamily. Classic translation factor GTPase family. EF-G/EF-2 subfamily.

It is found in the cytoplasm. Functionally, catalyzes the GTP-dependent ribosomal translocation step during translation elongation. During this step, the ribosome changes from the pre-translocational (PRE) to the post-translocational (POST) state as the newly formed A-site-bound peptidyl-tRNA and P-site-bound deacylated tRNA move to the P and E sites, respectively. Catalyzes the coordinated movement of the two tRNA molecules, the mRNA and conformational changes in the ribosome. This chain is Elongation factor G, found in Trichormus variabilis (strain ATCC 29413 / PCC 7937) (Anabaena variabilis).